The sequence spans 462 residues: uncharacterized protein (462 aa).

This sequence belongs to the IIV-6 329R family.

This is an uncharacterized protein from Aedes vexans (Inland floodwater mosquito).